Consider the following 559-residue polypeptide: Hepatocyte nuclear factor 1-beta-A (559 aa).

Residues 1–35 (MFANMVSKLTSLQQELLSALLDSGVTKDVLLQALE) form a dimerization region. The region spanning 5–36 (MVSKLTSLQQELLSALLDSGVTKDVLLQALED) is the HNF-p1 domain. A disordered region spans residues 53–98 (MSPSGSKLSDTDSKPVFHTLTNGHSKGKLSGDEGSEDGDDYDTPPI). Residues 85–94 (EGSEDGDDYD) show a composition bias toward acidic residues. The region spanning 100–195 (KELQSQNTEE…ILRQFNQATQ (96 aa)) is the POU-specific atypical domain. Positions 240-320 (LRRNRFKWGP…NRRKEEAFRQ (81 aa)) form a DNA-binding region, homeobox; HNF1-type. Composition is skewed to low complexity over residues 334–354 (LNSL…SPPS) and 370–381 (TSSTTINHHSSN). Residues 334–384 (LNSLLSHSSPHHPQTSSSPPSKMQGVRYSQQGPGEVTSSTTINHHSSNAMS) are disordered.

This sequence belongs to the HNF1 homeobox family. Binds DNA as a dimer. Can form homodimer or heterodimer with HNF1-alpha. As to expression, during embryonic development, expressed dynamically in the developing hindbrain, kidney (pronephros), gut, liver and pancreas; expressed in both intermediate mesoderm (precursor to the kidney) and the caudal hindbrain (including rhombomeres r5 and r6) at 10 hpf with expression diminishing caudally by 14 hpf. Strongly expressed in adult kidney, gut, liver and swim bladder; weakly expressed in brain, eye, testis, ovary and heart.

It is found in the nucleus. Functionally, transcription factor that binds to the inverted palindrome 5'-GTTAATNATTAAC-3'. Required for induction of rhombomere r5/r6 gene expression in the hindbrain. The chain is Hepatocyte nuclear factor 1-beta-A (hnf1ba) from Danio rerio (Zebrafish).